A 217-amino-acid chain; its full sequence is GrpE protein homolog 1, mitochondrial (217 aa).

The N-terminal 27 residues, 1–27 (MAARCVRLARRSLPALALSFRPSPRLL), are a transit peptide targeting the mitochondrion. An N6-acetyllysine; alternate modification is found at K94. Residue K94 is modified to N6-succinyllysine; alternate. K100 bears the N6-acetyllysine mark. K120 bears the N6-succinyllysine mark. N6-acetyllysine; alternate is present on K215. At K215 the chain carries N6-succinyllysine; alternate.

The protein belongs to the GrpE family. As to quaternary structure, probable component of the PAM complex at least composed of a mitochondrial HSP70 protein, GRPEL1 or GRPEL2, TIMM44, TIMM16/PAM16 and TIMM14/DNAJC19. Binds to HSP70, HSC70 and HSJ1B. In terms of tissue distribution, ubiquitous. Particularly abundant in heart, kidney and liver.

It localises to the mitochondrion matrix. Its function is as follows. Essential component of the PAM complex, a complex required for the translocation of transit peptide-containing proteins from the inner membrane into the mitochondrial matrix in an ATP-dependent manner. Seems to control the nucleotide-dependent binding of mitochondrial HSP70 to substrate proteins. In Rattus norvegicus (Rat), this protein is GrpE protein homolog 1, mitochondrial (Grpel1).